A 26-amino-acid polypeptide reads, in one-letter code: Histone H2B.1, sperm (26 aa).

Positions 1-26 (MPSQKSPTKRSPTKRSPQKGGKGAKR) are disordered. Short sequence motifs (SPKK motif) lie at residues 6-9 (SPTK), 11-14 (SPTK), and 16-19 (SPQK). The segment covering 7-26 (PTKRSPTKRSPQKGGKGAKR) has biased composition (basic residues). S11 and S16 each carry phosphoserine.

Belongs to the histone H2B family. In terms of assembly, the nucleosome is a histone octamer containing two molecules each of H2A, H2B, H3 and H4 assembled in one H3-H4 heterotetramer and two H2A-H2B heterodimers. The octamer wraps approximately 147 bp of DNA. Post-translationally, monoubiquitination gives a specific tag for epigenetic transcriptional activation and is also prerequisite for histone H3 'Lys-4' and 'Lys-79' methylation. In terms of processing, phosphorylated on SPKK motifs 2 and 3; which may regulate DNA binding. Dephosphorylated during maturation of spermatids to mature sperm and rephosphorylated at fertilization.

It is found in the nucleus. It localises to the chromosome. Functionally, core component of nucleosome. Nucleosomes wrap and compact DNA into chromatin, limiting DNA accessibility to the cellular machineries which require DNA as a template. Histones thereby play a central role in transcription regulation, DNA repair, DNA replication and chromosomal stability. DNA accessibility is regulated via a complex set of post-translational modifications of histones, also called histone code, and nucleosome remodeling. The polypeptide is Histone H2B.1, sperm (Echinus esculentus (Sea urchin)).